The following is a 98-amino-acid chain: uncharacterized protein (98 aa).

This is an uncharacterized protein from Acidianus two-tailed virus (ATV).